The sequence spans 390 residues: Transforming growth factor beta-1 proprotein (390 aa).

Residues Met-1–Gly-29 form the signal peptide. The tract at residues Leu-30–Pro-74 is straightjacket domain. Residues Glu-75 to Leu-271 form an arm domain region. Asn-82, Asn-136, and Asn-176 each carry an N-linked (GlcNAc...) asparagine glycan. The segment at Asp-226–Gly-252 is bowtie tail. Residues Arg-244–Asp-246 carry the Cell attachment site motif. Intrachain disulfides connect Cys-285–Cys-294, Cys-293–Cys-356, Cys-322–Cys-387, and Cys-326–Cys-389.

This sequence belongs to the TGF-beta family. As to quaternary structure, homodimer; disulfide-linked. Interacts with the serine proteases, HTRA1 and HTRA3: the interaction with either inhibits TGFB1-mediated signaling and the HTRA protease activity is required for this inhibition. May interact with THSD4; this interaction may lead to sequestration by FBN1 microfibril assembly and attenuation of TGFB signaling. Interacts with CD109, DPT and ASPN. Interacts with EFEMP2. Interacts with TSKU; the interaction contributes to regulation of the hair cycle. Interacts with TGFBR3. In terms of assembly, homodimer; disulfide-linked. Interacts with transforming growth factor beta-1 (TGF-beta-1) chain; interaction is non-covalent and maintains TGF-beta-1 in a latent state; each latency-associated peptide (LAP) monomer interacts with TGF-beta-1 in the other monomer. Interacts with LTBP1; leading to regulation of TGF-beta-1 activation. Interacts with LRRC32/GARP; leading to regulation of TGF-beta-1 activation on the surface of activated regulatory T-cells (Tregs). Interacts with LRRC33/NRROS; leading to regulation of TGF-beta-1 activation in macrophages and microglia. Interacts (via cell attachment site) with integrins ITGAV and ITGB6 (ITGAV:ITGB6), leading to release of the active TGF-beta-1. Interacts with NREP; the interaction results in a decrease in TGFB1 autoinduction. Interacts with HSP90AB1; inhibits latent TGFB1 activation. Homodimer; disulfide-linked. Interacts with TGF-beta receptors (TGFBR1 and TGFBR2), leading to signal transduction. Interacts with EFEMP2. In terms of processing, transforming growth factor beta-1 proprotein: The precursor proprotein is cleaved in the Golgi apparatus by FURIN to form Transforming growth factor beta-1 (TGF-beta-1) and Latency-associated peptide (LAP) chains, which remain non-covalently linked, rendering TGF-beta-1 inactive. Post-translationally, N-glycosylated. Deglycosylation leads to activation of Transforming growth factor beta-1 (TGF-beta-1); mechanisms triggering deglycosylation-driven activation of TGF-beta-1 are however unclear.

Its subcellular location is the secreted. It localises to the extracellular space. It is found in the extracellular matrix. Its function is as follows. Transforming growth factor beta-1 proprotein: Precursor of the Latency-associated peptide (LAP) and Transforming growth factor beta-1 (TGF-beta-1) chains, which constitute the regulatory and active subunit of TGF-beta-1, respectively. In terms of biological role, required to maintain the Transforming growth factor beta-1 (TGF-beta-1) chain in a latent state during storage in extracellular matrix. Associates non-covalently with TGF-beta-1 and regulates its activation via interaction with 'milieu molecules', such as LTBP1, LRRC32/GARP and LRRC33/NRROS, that control activation of TGF-beta-1. Interaction with LRRC33/NRROS regulates activation of TGF-beta-1 in macrophages and microglia. Interaction with LRRC32/GARP controls activation of TGF-beta-1 on the surface of activated regulatory T-cells (Tregs). Interaction with integrins (ITGAV:ITGB6 or ITGAV:ITGB8) results in distortion of the Latency-associated peptide chain and subsequent release of the active TGF-beta-1. Functionally, multifunctional protein that regulates the growth and differentiation of various cell types and is involved in various processes, such as normal development, immune function, microglia function and responses to neurodegeneration. Activation into mature form follows different steps: following cleavage of the proprotein in the Golgi apparatus, Latency-associated peptide (LAP) and Transforming growth factor beta-1 (TGF-beta-1) chains remain non-covalently linked rendering TGF-beta-1 inactive during storage in extracellular matrix. At the same time, LAP chain interacts with 'milieu molecules', such as LTBP1, LRRC32/GARP and LRRC33/NRROS that control activation of TGF-beta-1 and maintain it in a latent state during storage in extracellular milieus. TGF-beta-1 is released from LAP by integrins (ITGAV:ITGB6 or ITGAV:ITGB8): integrin-binding to LAP stabilizes an alternative conformation of the LAP bowtie tail and results in distortion of the LAP chain and subsequent release of the active TGF-beta-1. Once activated following release of LAP, TGF-beta-1 acts by binding to TGF-beta receptors (TGFBR1 and TGFBR2), which transduce signal. While expressed by many cells types, TGF-beta-1 only has a very localized range of action within cell environment thanks to fine regulation of its activation by Latency-associated peptide chain (LAP) and 'milieu molecules'. Plays an important role in bone remodeling: acts as a potent stimulator of osteoblastic bone formation, causing chemotaxis, proliferation and differentiation in committed osteoblasts. Can promote either T-helper 17 cells (Th17) or regulatory T-cells (Treg) lineage differentiation in a concentration-dependent manner. At high concentrations, leads to FOXP3-mediated suppression of RORC and down-regulation of IL-17 expression, favoring Treg cell development. At low concentrations in concert with IL-6 and IL-21, leads to expression of the IL-17 and IL-23 receptors, favoring differentiation to Th17 cells. Stimulates sustained production of collagen through the activation of CREB3L1 by regulated intramembrane proteolysis (RIP). Mediates SMAD2/3 activation by inducing its phosphorylation and subsequent translocation to the nucleus. Positively regulates odontoblastic differentiation in dental papilla cells, via promotion of IPO7-mediated translocation of phosphorylated SMAD2 to the nucleus and subsequent transcription of target genes. Can induce epithelial-to-mesenchymal transition (EMT) and cell migration in various cell types. The chain is Transforming growth factor beta-1 proprotein (TGFB1) from Bos taurus (Bovine).